Consider the following 175-residue polypeptide: Type-2 ice-structuring protein (175 aa).

Residues 1 to 16 form the signal peptide; that stretch reads MLAALLVCAMVALTRA. The propeptide occupies 17–33; it reads ANGDTGKEAVMTGSSGK. The 128-residue stretch at 36 to 163 folds into the C-type lectin domain; the sequence is TECPTDWKMF…LHASVCAKPA (128 aa). Intrachain disulfides connect Cys38–Cys49, Cys66–Cys159, Cys103–Cys134, Cys123–Cys145, and Cys135–Cys151.

The protein resides in the secreted. Antifreeze proteins lower the blood freezing point. The protein is Type-2 ice-structuring protein of Osmerus mordax (Rainbow smelt).